A 562-amino-acid chain; its full sequence is AT-rich interactive domain-containing protein 1 (562 aa).

Residues 43-136 (KELISLFRPL…YLDAFGRWLN (94 aa)) enclose the ARID domain. The ELM2 domain occupies 358–448 (PCALVGSKFQ…KLELGPAFYM (91 aa)).

The protein resides in the nucleus. The chain is AT-rich interactive domain-containing protein 1 (ARID1) from Arabidopsis thaliana (Mouse-ear cress).